The following is a 231-amino-acid chain: MALPKIYVALDCQTQEAADNLVSQLPAGKVGLKVGKELFTAIGPDWVKKQVEQGFSVFLDLKFHDIPNTVAKAVTSAAKIGVDIVNVHASGGTEMMSAARDALKQFDKPPLLIAVTVLTSMSDSDLNEIGIQATAEQQVLKLAKLAQQAGLNGVVCSAQEARMLKHDLGTSFKLVTPGIRPANSATGDQKRVMTPEAAIEAGVDYMVIGRPITQAADPTASVAEILTSIGE.

Substrate contacts are provided by residues Asp-11, Lys-33, Asp-60 to Thr-69, Thr-119, Arg-180, Gln-189, Gly-209, and Arg-210. Catalysis depends on Lys-62, which acts as the Proton donor.

It belongs to the OMP decarboxylase family. Type 1 subfamily. In terms of assembly, homodimer.

It catalyses the reaction orotidine 5'-phosphate + H(+) = UMP + CO2. It functions in the pathway pyrimidine metabolism; UMP biosynthesis via de novo pathway; UMP from orotate: step 2/2. Functionally, catalyzes the decarboxylation of orotidine 5'-monophosphate (OMP) to uridine 5'-monophosphate (UMP). The sequence is that of Orotidine 5'-phosphate decarboxylase from Idiomarina loihiensis (strain ATCC BAA-735 / DSM 15497 / L2-TR).